An 87-amino-acid polypeptide reads, in one-letter code: MARVTVEDCLEHVDNRFELVMLSTKRARQLATGGKEPLVQWENDKPTVVALREIAEGLMSYEFIANAEIVEDEPLFAAFEDESNEAV.

It belongs to the RNA polymerase subunit omega family. The RNAP catalytic core consists of 2 alpha, 1 beta, 1 beta' and 1 omega subunit. When a sigma factor is associated with the core the holoenzyme is formed, which can initiate transcription.

It carries out the reaction RNA(n) + a ribonucleoside 5'-triphosphate = RNA(n+1) + diphosphate. Functionally, promotes RNA polymerase assembly. Latches the N- and C-terminal regions of the beta' subunit thereby facilitating its interaction with the beta and alpha subunits. This chain is DNA-directed RNA polymerase subunit omega, found in Pseudomonas fluorescens (strain SBW25).